Reading from the N-terminus, the 504-residue chain is uncharacterized protein (504 aa).

Helical transmembrane passes span 146–166, 196–216, and 330–350; these read TSAG…INIA, SSAA…ADVL, and SMAL…VAVA. 372-492 lines the a nucleoside 3',5'-cyclic phosphate pocket; sequence FLNIDVPLQA…EIAYGVARTR (121 aa).

It localises to the cell membrane. This is an uncharacterized protein from Mycobacterium tuberculosis (strain CDC 1551 / Oshkosh).